The primary structure comprises 116 residues: Large ribosomal subunit protein bL17 (116 aa).

It belongs to the bacterial ribosomal protein bL17 family. Part of the 50S ribosomal subunit. Contacts protein L32.

The polypeptide is Large ribosomal subunit protein bL17 (Sulfurovum sp. (strain NBC37-1)).